The chain runs to 417 residues: UDP-N-acetylglucosamine 1-carboxyvinyltransferase (417 aa).

22–23 (KN) contributes to the phosphoenolpyruvate binding site. Arginine 91 lines the UDP-N-acetyl-alpha-D-glucosamine pocket. The active-site Proton donor is cysteine 115. Position 115 is a 2-(S-cysteinyl)pyruvic acid O-phosphothioketal (cysteine 115). Residues 120–124 (RPVDL), aspartate 304, and isoleucine 326 each bind UDP-N-acetyl-alpha-D-glucosamine.

The protein belongs to the EPSP synthase family. MurA subfamily.

It localises to the cytoplasm. It carries out the reaction phosphoenolpyruvate + UDP-N-acetyl-alpha-D-glucosamine = UDP-N-acetyl-3-O-(1-carboxyvinyl)-alpha-D-glucosamine + phosphate. It functions in the pathway cell wall biogenesis; peptidoglycan biosynthesis. Functionally, cell wall formation. Adds enolpyruvyl to UDP-N-acetylglucosamine. This is UDP-N-acetylglucosamine 1-carboxyvinyltransferase from Nitratidesulfovibrio vulgaris (strain DSM 19637 / Miyazaki F) (Desulfovibrio vulgaris).